Here is a 429-residue protein sequence, read N- to C-terminus: Adenylosuccinate synthetase (429 aa).

GTP contacts are provided by residues 12–18 (GDEGKGK) and 40–42 (GHT). Catalysis depends on aspartate 13, which acts as the Proton acceptor. Positions 13 and 40 each coordinate Mg(2+). IMP-binding positions include 13 to 16 (DEGK), 38 to 41 (NAGH), threonine 129, arginine 143, glutamine 223, threonine 238, and arginine 302. The active-site Proton donor is histidine 41. Position 298–304 (298–304 (TVTGRKR)) interacts with substrate. GTP is bound by residues arginine 304, 330–332 (KLD), and 412–414 (STS).

Belongs to the adenylosuccinate synthetase family. In terms of assembly, homodimer. It depends on Mg(2+) as a cofactor.

It is found in the cytoplasm. It carries out the reaction IMP + L-aspartate + GTP = N(6)-(1,2-dicarboxyethyl)-AMP + GDP + phosphate + 2 H(+). The protein operates within purine metabolism; AMP biosynthesis via de novo pathway; AMP from IMP: step 1/2. Plays an important role in the de novo pathway of purine nucleotide biosynthesis. Catalyzes the first committed step in the biosynthesis of AMP from IMP. The protein is Adenylosuccinate synthetase of Rhizorhabdus wittichii (strain DSM 6014 / CCUG 31198 / JCM 15750 / NBRC 105917 / EY 4224 / RW1) (Sphingomonas wittichii).